A 1893-amino-acid polypeptide reads, in one-letter code: Protein TIC 214 (1893 aa).

The next 6 helical transmembrane spans lie at 18–38 (IINSVVVVGLYYGFLTTFSIG), 63–83 (AITGFITGQLMMFISIYYAPL), 87–107 (LGRPHTITVLALPYLLFHFFW), 127–147 (LSIQCVFLNNLIFQLLNHFIL), 175–195 (VGWLIGHILFMKWVGLVLVWI), and 224–244 (IFSILLFITCVYYLGRIPSPI). Composition is skewed to basic and acidic residues over residues 249–258 (MKETSETEER) and 268–287 (EIERTSETKGTKQEQERSTE). The interval 249–317 (MKETSETEER…TEEIRVNGKE (69 aa)) is disordered. Positions 298–309 (EKEDPDKIDETE) are enriched in acidic residues. Residues 1126–1146 (LHYFIKFFIERIYIDILLCLI) form a helical membrane-spanning segment.

Belongs to the TIC214 family. As to quaternary structure, part of the Tic complex.

The protein resides in the plastid. The protein localises to the chloroplast inner membrane. In terms of biological role, involved in protein precursor import into chloroplasts. May be part of an intermediate translocation complex acting as a protein-conducting channel at the inner envelope. The sequence is that of Protein TIC 214 from Vitis vinifera (Grape).